The chain runs to 189 residues: S-protein homolog 26 (189 aa).

A signal peptide spans 1 to 25 (MISMNRLSILLFVFAFGLTMMSNTA).

Belongs to the plant self-incompatibility (S1) protein family.

The protein localises to the secreted. The polypeptide is S-protein homolog 26 (Arabidopsis thaliana (Mouse-ear cress)).